Reading from the N-terminus, the 320-residue chain is Glyoxylate/hydroxypyruvate reductase B (320 aa).

Active-site residues include Arg233 and Glu262. His281 (proton donor) is an active-site residue.

Belongs to the D-isomer specific 2-hydroxyacid dehydrogenase family. GhrB subfamily. Homodimer.

It localises to the cytoplasm. It catalyses the reaction glycolate + NADP(+) = glyoxylate + NADPH + H(+). It carries out the reaction (R)-glycerate + NAD(+) = 3-hydroxypyruvate + NADH + H(+). The catalysed reaction is (R)-glycerate + NADP(+) = 3-hydroxypyruvate + NADPH + H(+). Its function is as follows. Catalyzes the NADPH-dependent reduction of glyoxylate and hydroxypyruvate into glycolate and glycerate, respectively. This chain is Glyoxylate/hydroxypyruvate reductase B, found in Pectobacterium atrosepticum (strain SCRI 1043 / ATCC BAA-672) (Erwinia carotovora subsp. atroseptica).